Reading from the N-terminus, the 287-residue chain is Nitrogenase iron protein (287 aa).

Residue 8–15 (GKGGIGKS) participates in ATP binding. Cys96 lines the [4Fe-4S] cluster pocket. Arg99 carries the ADP-ribosylarginine; by dinitrogenase reductase ADP-ribosyltransferase modification. [4Fe-4S] cluster is bound at residue Cys130.

The protein belongs to the NifH/BchL/ChlL family. As to quaternary structure, homodimer. [4Fe-4S] cluster serves as cofactor. In terms of processing, the reversible ADP-ribosylation of Arg-99 inactivates the nitrogenase reductase and regulates nitrogenase activity.

The catalysed reaction is N2 + 8 reduced [2Fe-2S]-[ferredoxin] + 16 ATP + 16 H2O = H2 + 8 oxidized [2Fe-2S]-[ferredoxin] + 2 NH4(+) + 16 ADP + 16 phosphate + 6 H(+). Functionally, the key enzymatic reactions in nitrogen fixation are catalyzed by the nitrogenase complex, which has 2 components: the iron protein and the molybdenum-iron protein. This chain is Nitrogenase iron protein, found in Frankia casuarinae (strain DSM 45818 / CECT 9043 / HFP020203 / CcI3).